We begin with the raw amino-acid sequence, 132 residues long: Large ribosomal subunit protein uL22 (132 aa).

Belongs to the universal ribosomal protein uL22 family. Part of the 50S ribosomal subunit.

Its function is as follows. This protein binds specifically to 23S rRNA; its binding is stimulated by other ribosomal proteins, e.g. L4, L17, and L20. It is important during the early stages of 50S assembly. It makes multiple contacts with different domains of the 23S rRNA in the assembled 50S subunit and ribosome. Functionally, the globular domain of the protein is located near the polypeptide exit tunnel on the outside of the subunit, while an extended beta-hairpin is found that lines the wall of the exit tunnel in the center of the 70S ribosome. In Pelagibacter ubique (strain HTCC1062), this protein is Large ribosomal subunit protein uL22.